We begin with the raw amino-acid sequence, 163 residues long: uncharacterized protein (163 aa).

Residues 30 to 163 are disordered; that stretch reads GNENTSVSSD…IYKKLGKKKR (134 aa). A compositionally biased stretch (basic and acidic residues) spans 88 to 118; the sequence is ERQLQKKKEAEKIEGGKNHDNLKRKLNKVGD. The span at 119–133 shows a compositional bias: acidic residues; the sequence is ELNEQQSDTDDDDDD. S125 carries the phosphoserine modification. At T127 the chain carries Phosphothreonine.

It localises to the nucleus. Its subcellular location is the nucleolus. This is an uncharacterized protein from Schizosaccharomyces pombe (strain 972 / ATCC 24843) (Fission yeast).